The chain runs to 328 residues: tRNA dimethylallyltransferase (328 aa).

19–26 (GPTASGKT) contributes to the ATP binding site. Residue 21–26 (TASGKT) participates in substrate binding. Interaction with substrate tRNA stretches follow at residues 50-53 (DSAL), 174-178 (QRIQR), and 257-262 (RCVGYR).

Belongs to the IPP transferase family. In terms of assembly, monomer. Mg(2+) serves as cofactor.

The enzyme catalyses adenosine(37) in tRNA + dimethylallyl diphosphate = N(6)-dimethylallyladenosine(37) in tRNA + diphosphate. Its function is as follows. Catalyzes the transfer of a dimethylallyl group onto the adenine at position 37 in tRNAs that read codons beginning with uridine, leading to the formation of N6-(dimethylallyl)adenosine (i(6)A). This is tRNA dimethylallyltransferase from Leptothrix cholodnii (strain ATCC 51168 / LMG 8142 / SP-6) (Leptothrix discophora (strain SP-6)).